The following is a 131-amino-acid chain: Insulin-like 3 (131 aa).

Residues 1–26 form the signal peptide; sequence MDPHPLTWALVLLGPALALSRAPAPA. Intrachain disulfides connect Cys-34–Cys-116, Cys-46–Cys-129, and Cys-115–Cys-120. The propeptide at 58–103 is c peptide like; the sequence is AVAGGDRELLQWLEGQHLFHGLMASGDPMLVLAPQPPPQASGHHHH.

Belongs to the insulin family. In terms of assembly, heterodimer of a B chain and an A chain linked by two disulfide bonds. Expressed exclusively in prenatal and postnatal Leydig cells.

It is found in the secreted. In terms of biological role, seems to play a role in testicular function. May be a trophic hormone with a role in testicular descent in fetal life. Is a ligand for LGR8 receptor. This is Insulin-like 3 (INSL3) from Sus scrofa (Pig).